Here is a 302-residue protein sequence, read N- to C-terminus: UDP-N-acetylenolpyruvoylglucosamine reductase (302 aa).

The region spanning isoleucine 30–glycine 196 is the FAD-binding PCMH-type domain. Arginine 174 is an active-site residue. Serine 225 functions as the Proton donor in the catalytic mechanism. Residue glutamate 295 is part of the active site.

This sequence belongs to the MurB family. FAD serves as cofactor.

It is found in the cytoplasm. The catalysed reaction is UDP-N-acetyl-alpha-D-muramate + NADP(+) = UDP-N-acetyl-3-O-(1-carboxyvinyl)-alpha-D-glucosamine + NADPH + H(+). It participates in cell wall biogenesis; peptidoglycan biosynthesis. Functionally, cell wall formation. In Anoxybacillus flavithermus (strain DSM 21510 / WK1), this protein is UDP-N-acetylenolpyruvoylglucosamine reductase.